The chain runs to 156 residues: Cell division protein SepF (156 aa).

The span at 20–36 (AQYGYEKEQTDMKKQQD) shows a compositional bias: basic and acidic residues. The tract at residues 20–50 (AQYGYEKEQTDMKKQQDPPEQQDVTFPKAQP) is disordered.

Belongs to the SepF family. As to quaternary structure, homodimer. Interacts with FtsZ.

The protein resides in the cytoplasm. Functionally, cell division protein that is part of the divisome complex and is recruited early to the Z-ring. Probably stimulates Z-ring formation, perhaps through the cross-linking of FtsZ protofilaments. Its function overlaps with FtsA. The protein is Cell division protein SepF of Bacillus cereus (strain G9842).